The primary structure comprises 92 residues: Small ribosomal subunit protein uS19c (92 aa).

This sequence belongs to the universal ribosomal protein uS19 family.

It is found in the plastid. Its subcellular location is the chloroplast. Protein S19 forms a complex with S13 that binds strongly to the 16S ribosomal RNA. The chain is Small ribosomal subunit protein uS19c from Oedogonium cardiacum (Filamentous green alga).